The primary structure comprises 778 residues: Molybdenum cofactor sulfurase (778 aa).

At lysine 235 the chain carries N6-(pyridoxal phosphate)lysine. Cysteine 399 is an active-site residue. Disordered regions lie at residues 576-596 (LSKNPSLFRSSSSRSRSSRVC) and 654-673 (ARPALPGSFPPSPPDSDTEK). The segment covering 584–594 (RSSSSRSRSSR) has biased composition (low complexity). The MOSC domain maps to 651-778 (LPTARPALPG…ETAERARSRL (128 aa)).

It belongs to the class-V pyridoxal-phosphate-dependent aminotransferase family. MOCOS subfamily. The cofactor is pyridoxal 5'-phosphate.

It catalyses the reaction Mo-molybdopterin + L-cysteine + AH2 = thio-Mo-molybdopterin + L-alanine + A + H2O. It participates in cofactor biosynthesis; molybdopterin biosynthesis. Sulfurates the molybdenum cofactor. Sulfation of molybdenum is essential for xanthine dehydrogenase (XDH) and aldehyde oxidase (ADO) enzymes in which molybdenum cofactor is liganded by 1 oxygen and 1 sulfur atom in active form. This is Molybdenum cofactor sulfurase from Chaetomium globosum (strain ATCC 6205 / CBS 148.51 / DSM 1962 / NBRC 6347 / NRRL 1970) (Soil fungus).